A 150-amino-acid polypeptide reads, in one-letter code: MALRQIRLSEDEILRKKSRPVEVVDDKIRQILDDMLDTLQNTENGAAIAAPQVGILKQLVVIATGEDIIKLVNPKIVKKEGEQEVVEGCLSIPNVYGKLKRPKKVTVEALNENGEKITLTGEGFLAKCFCHEIDHLDGILFTDLVTEYIK.

The Fe cation site is built by Cys-89 and His-131. The active site involves Glu-132. His-135 serves as a coordination point for Fe cation.

The protein belongs to the polypeptide deformylase family. Fe(2+) is required as a cofactor.

The catalysed reaction is N-terminal N-formyl-L-methionyl-[peptide] + H2O = N-terminal L-methionyl-[peptide] + formate. In terms of biological role, removes the formyl group from the N-terminal Met of newly synthesized proteins. Requires at least a dipeptide for an efficient rate of reaction. N-terminal L-methionine is a prerequisite for activity but the enzyme has broad specificity at other positions. The polypeptide is Peptide deformylase 2 (Clostridium acetobutylicum (strain ATCC 824 / DSM 792 / JCM 1419 / IAM 19013 / LMG 5710 / NBRC 13948 / NRRL B-527 / VKM B-1787 / 2291 / W)).